Here is a 938-residue protein sequence, read N- to C-terminus: Kinesin-like protein KIN-7B (938 aa).

Residues 29 to 348 (KILVTVRMRP…LSFAMSAKEV (320 aa)) enclose the Kinesin motor domain. 113–120 (GQTSSGKT) is an ATP binding site. A coiled-coil region spans residues 357 to 431 (VVSEKKLLKH…DLERKAKERK (75 aa)). The disordered stretch occupies residues 450–481 (TKEESIPSKSVPSSRRTARDRRKDNVRQSLTS). Residues 555–590 (KANLKEEINRLNSQEIAALEKKLECVQNTIDMLVSS) are a coiled coil. Positions 628 to 678 (CSPLSGTENKDPESNVVSANSAPVSFGATPPKRDDNRCRTQSREGTPVSRQ) are disordered. A compositionally biased stretch (low complexity) spans 641–652 (SNVVSANSAPVS). The segment covering 658–669 (PKRDDNRCRTQS) has biased composition (basic and acidic residues).

The protein belongs to the TRAFAC class myosin-kinesin ATPase superfamily. Kinesin family. KIN-7 subfamily. In terms of assembly, interacts with ANP3. Interacts with TIO/FU. As to expression, expressed in roots, stems, flowers, pollen mother cells and embryos.

The protein localises to the cytoplasm. The protein resides in the cytoskeleton. It localises to the phragmoplast. Its function is as follows. Probable plus end-directed motor protein that functions in the NACK-PQR (ANP3-MKK6-MPK4) MAP kinase signaling pathway, which is essential for somatic cell cytokinesis, especially for the cell-plate formation and its expansion. May regulate the activity and the localization of ANP3, probably by association through the non-catalytic region of the kinase. Functionally redundant with NACK1 and essential to promote the progression of cytokinesis and for cellularization (formation of the cell plate) during microgametogenesis and megagametogenesis. The polypeptide is Kinesin-like protein KIN-7B (Arabidopsis thaliana (Mouse-ear cress)).